The sequence spans 539 residues: Fucosyltransferase 2 (539 aa).

Residues 1 to 5 (MRITE) are Cytoplasmic-facing. The helical; Signal-anchor for type II membrane protein transmembrane segment at 6 to 26 (ILALFMVLVPVSLVIVAMFGY) threads the bilayer. Over 27 to 539 (DQGNGFVQAS…SWGLKLVDNF (513 aa)) the chain is Lumenal. Residues Asn-44, Asn-231, and Asn-482 are each glycosylated (N-linked (GlcNAc...) asparagine).

The protein belongs to the glycosyltransferase 37 family. As to expression, expressed in roots, stems, leaves, flowers, siliques and seedlings.

It localises to the golgi apparatus. The protein resides in the golgi stack membrane. It functions in the pathway protein modification; protein glycosylation. Its function is as follows. May be involved in cell wall biosynthesis. May act as a fucosyltransferase. In Arabidopsis thaliana (Mouse-ear cress), this protein is Fucosyltransferase 2 (FUT2).